A 367-amino-acid polypeptide reads, in one-letter code: Putrescine/agmatine-binding protein (367 aa).

An N-terminal signal peptide occupies residues 1-19; it reads MKKVCALALSILTTIGATA.

This sequence belongs to the bacterial solute-binding protein 1 family.

The protein localises to the periplasm. Binds putrescine and agmatine. The polypeptide is Putrescine/agmatine-binding protein (Pseudomonas aeruginosa (strain ATCC 15692 / DSM 22644 / CIP 104116 / JCM 14847 / LMG 12228 / 1C / PRS 101 / PAO1)).